The chain runs to 309 residues: Methionyl-tRNA formyltransferase (309 aa).

109-112 is a (6S)-5,6,7,8-tetrahydrofolate binding site; sequence SLLP.

It belongs to the Fmt family.

It carries out the reaction L-methionyl-tRNA(fMet) + (6R)-10-formyltetrahydrofolate = N-formyl-L-methionyl-tRNA(fMet) + (6S)-5,6,7,8-tetrahydrofolate + H(+). Functionally, attaches a formyl group to the free amino group of methionyl-tRNA(fMet). The formyl group appears to play a dual role in the initiator identity of N-formylmethionyl-tRNA by promoting its recognition by IF2 and preventing the misappropriation of this tRNA by the elongation apparatus. The chain is Methionyl-tRNA formyltransferase from Clostridium perfringens (strain SM101 / Type A).